The following is a 427-amino-acid chain: Interferon regulatory factor 3 (427 aa).

Thr-3 is subject to Phosphothreonine. Residues 5–111 (KPRILPWLVS…DPHKIYEFVN (107 aa)) constitute a DNA-binding region (IRF tryptophan pentad repeat). A Phosphoserine modification is found at Ser-14. Thr-75 carries the post-translational modification Phosphothreonine. A compositionally biased stretch (basic and acidic residues) spans 91-107 (RLAEDRSKDPHDPHKIY). Residues 91–136 (RLAEDRSKDPHDPHKIYEFVNSGVGDFSQPDTSPDTNGGGSTSDTQ) form a disordered region. Phosphoserine is present on residues Ser-97 and Ser-123. A Nuclear export signal motif is present at residues 139 to 149 (ILDELLGNMVL). The interval 141–427 (DELLGNMVLA…GMDFQGPGES (287 aa)) is mediates interaction with ZDHHC11. At Ser-175 the chain carries (Microbial infection) Phosphoserine. At Thr-180 the chain carries Phosphothreonine. A Phosphoserine modification is found at Ser-188. Residue Lys-193 forms a Glycyl lysine isopeptide (Lys-Gly) (interchain with G-Cter in ISG15) linkage. Residues 200–360 (EEWEFEVTAF…SWPQDQPWTK (161 aa)) are interaction with HERC5. A phosphothreonine mark is found at Thr-237, Thr-244, and Thr-253. Cys-267 and Cys-289 form a disulfide bridge. Glycyl lysine isopeptide (Lys-Gly) (interchain with G-Cter in ISG15) cross-links involve residues Lys-360 and Lys-366. Residue Lys-366 is modified to N6-acetyllysine. Ser-385 is modified (phosphoserine). Ser-386 bears the Diphosphoserine mark. A Phosphoserine; by TBK1 modification is found at Ser-386. Position 396 is a phosphoserine; by IKKE and TBK1 (Ser-396). The residue at position 398 (Ser-398) is a Phosphoserine. Thr-404 is modified (phosphothreonine). Ser-427 carries the phosphoserine modification.

The protein belongs to the IRF family. In terms of assembly, monomer. Homodimer; phosphorylation-induced. Interacts (when phosphorylated) with CREBBP. Interacts with MAVS (via phosphorylated pLxIS motif). Interacts with TICAM1 (via phosphorylated pLxIS motif). Interacts with STING1 (via phosphorylated pLxIS motif). Interacts with IKBKE and TBK1. Interacts with TICAM2. Interacts with RBCK1. Interacts with HERC5. Interacts with DDX3X (phosphorylated at 'Ser-102'); the interaction allows the phosphorylation and activation of IRF3 by IKBKE. Interacts with TRIM21 and ULK1, in the presence of TRIM21; this interaction leads to IRF3 degradation by autophagy. Interacts with RIOK3; RIOK3 probably mediates the interaction of TBK1 with IRF3. Interacts with ILRUN; the interaction inhibits IRF3 binding to its DNA consensus sequence. Interacts with LYAR; this interaction impairs IRF3 DNA-binding activity. Interacts with TRAF3. Interacts with ZDHHC11; ZDHHC11 recruits IRF3 to STING1 upon DNA virus infection and thereby promotes IRF3 activation. Interacts with HSP90AA1; the interaction mediates IRF3 association with TOMM70. Interacts with BCL2; the interaction decreases upon Sendai virus infection. Interacts with BAX; the interaction is direct, increases upon Sendai virus infection and mediates the formation of the apoptosis complex TOMM70:HSP90AA1:IRF3:BAX. Interacts with DDX56. Interacts with NBR1. As to quaternary structure, (Microbial infection) Interacts with rotavirus A NSP1 (via pLxIS motif); this interaction leads to the proteasome-dependent degradation of IRF3. (Microbial infection) Interacts with herpes virus 8/HHV-8 protein VIRF1. In terms of assembly, (Microbial infection) Interacts with Seneca Valley virus protease 3C; this interaction is involved in the suppression of IRF3 expression and phosphorylation by the virus. As to quaternary structure, (Microbial infection) Interacts with herpes virus 2/HHV-2 protein ICP27; this interaction inhibits IRF3 phosphorylation and nuclear translocation. (Microbial infection) Interacts with human cytomegalovirus protein UL44; this interaction prevents IRF3 binding to its promoters. In terms of assembly, (Microbial infection) Interacts with the two fragments of MERS-COV protein N produced by CASP6 through proteolytic cleavage; both interactions inhibit IRF3 nuclear translocation after activation and IFN signaling. In terms of processing, constitutively phosphorylated on many Ser/Thr residues. Activated following phosphorylation by TBK1 and IKBKE. Innate adapter proteins, such as MAVS, STING1 or TICAM1, are first activated by viral RNA, cytosolic DNA, and bacterial lipopolysaccharide (LPS), respectively, leading to activation of the kinases TBK1 and IKBKE. These kinases then phosphorylate the adapter proteins on the pLxIS motif, leading to recruitment of IRF3, thereby licensing IRF3 for phosphorylation by TBK1. Phosphorylation at Ser-386 is followed by pyrophosphorylation at the same residue, promoting phosphorylation at Ser-396. Phosphorylated IRF3 dissociates from the adapter proteins, dimerizes, and then enters the nucleus to induce IFNs. Post-translationally, pyrophosphorylated by UAP1 following phosphorylation at Ser-386 by TBK1. Pyrophosphorylation promotes subsequent phosphorylation at Ser-396, leading to homodimerization of IRF3. Acetylation at Lys-366 by KAT8 inhibits recruimtent to promoters and transcription factor activity. Acetylation by KAT8 is promoted by phosphorylation at Ser-396. In terms of processing, ubiquitinated; ubiquitination involves RBCK1 leading to proteasomal degradation. Polyubiquitinated; ubiquitination involves TRIM21 leading to proteasomal degradation. Ubiquitinated by UBE3C, leading to its degradation. Deubiquitinated by USP5 on both 'Lys-48'-linked unanchored and 'Lys-63'-linked anchored polyubiquitin, leading to inhibition of anti-RNA viral innate immunity. Post-translationally, ISGylated by HERC5 resulting in sustained IRF3 activation and in the inhibition of IRF3 ubiquitination by disrupting PIN1 binding. The phosphorylation state of IRF3 does not alter ISGylation. Proteolytically cleaved by apoptotic caspases during apoptosis, leading to its inactivation. Cleavage by CASP3 during virus-induced apoptosis inactivates it, preventing cytokine overproduction. In terms of processing, (Microbial infection) ISGylated. ISGylation is cleaved and removed by SARS-COV-2 nsp3 which attenuates type I interferon responses. Post-translationally, (Microbial infection) Phosphorylation and subsequent activation of IRF3 is inhibited by vaccinia virus protein E3. (Microbial infection) Phosphorylated by herpes simplex virus 1/HHV-1 US3 at Ser-175 to prevent IRF3 activation. Expressed constitutively in a variety of tissues.

It localises to the cytoplasm. Its subcellular location is the nucleus. The protein resides in the mitochondrion. Its activity is regulated as follows. In the absence of viral infection, maintained as a monomer in an autoinhibited state. Phosphorylation by TBK1 and IKBKE disrupts this autoinhibition leading to the liberation of the DNA-binding and dimerization activities and its nuclear localization where it can activate type I IFN and ISG genes. Phosphorylation and activation follow the following steps: innate adapter proteins, such as MAVS, STING1 or TICAM1, are first activated by viral RNA, cytosolic DNA and bacterial lipopolysaccharide (LPS), respectively, leading to activation of the kinases TBK1 and IKBKE. These kinases then phosphorylate the adapter proteins on their pLxIS motif, leading to recruitment of IRF3, thereby licensing IRF3 for phosphorylation by TBK1. Phosphorylated IRF3 dissociates from the adapter proteins, dimerizes, and then enters the nucleus to induce IFNs. (Microbial infection) Activated upon coronavirus SARS-CoV-2 infection. Key transcriptional regulator of type I interferon (IFN)-dependent immune responses which plays a critical role in the innate immune response against DNA and RNA viruses. Regulates the transcription of type I IFN genes (IFN-alpha and IFN-beta) and IFN-stimulated genes (ISG) by binding to an interferon-stimulated response element (ISRE) in their promoters. Acts as a more potent activator of the IFN-beta (IFNB) gene than the IFN-alpha (IFNA) gene and plays a critical role in both the early and late phases of the IFNA/B gene induction. Found in an inactive form in the cytoplasm of uninfected cells and following viral infection, double-stranded RNA (dsRNA), or toll-like receptor (TLR) signaling, is phosphorylated by IKBKE and TBK1 kinases. This induces a conformational change, leading to its dimerization and nuclear localization and association with CREB binding protein (CREBBP) to form dsRNA-activated factor 1 (DRAF1), a complex which activates the transcription of the type I IFN and ISG genes. Can activate distinct gene expression programs in macrophages and can induce significant apoptosis in primary macrophages. In response to Sendai virus infection, is recruited by TOMM70:HSP90AA1 to mitochondrion and forms an apoptosis complex TOMM70:HSP90AA1:IRF3:BAX inducing apoptosis. Key transcription factor regulating the IFN response during SARS-CoV-2 infection. This chain is Interferon regulatory factor 3, found in Homo sapiens (Human).